The following is a 361-amino-acid chain: 5-exo-hydroxycamphor dehydrogenase (361 aa).

Zn(2+) is bound by residues cysteine 40, histidine 62, cysteine 98, cysteine 101, cysteine 104, and cysteine 170.

It belongs to the zinc-containing alcohol dehydrogenase family. Zn(2+) is required as a cofactor.

The catalysed reaction is (1R,4R,5R)-5-hydroxycamphor + NAD(+) = (1R,4R)-bornane-2,5-dione + NADH + H(+). It functions in the pathway terpene metabolism; (R)-camphor degradation. The sequence is that of 5-exo-hydroxycamphor dehydrogenase (camD) from Pseudomonas putida (Arthrobacter siderocapsulatus).